Reading from the N-terminus, the 620-residue chain is Somatic embryogenesis receptor kinase 4 (620 aa).

Residues 1–33 form the signal peptide; sequence MTSSKMEQRSLLCFLYLLLLFNFTLRVAGNAEG. Topologically, residues 34–234 are extracellular; sequence DALTQLKNSL…GGQMTAAIAG (201 aa). LRR repeat units follow at residues 100–122, 124–146, 148–170, 171–193, and 194–215; these read NLQY…LGDL, ELVS…LGKL, KLRF…LTSV, QLQV…GSFS, and LFTP…PPTS. The N-linked (GlcNAc...) asparagine glycan is linked to asparagine 110. N-linked (GlcNAc...) asparagine glycosylation is found at asparagine 156, asparagine 189, and asparagine 202. Residues 205–227 are disordered; that stretch reads LTDLPEPPPTSTSPTPPPPSGGQ. Positions 209-224 are enriched in pro residues; the sequence is PEPPPTSTSPTPPPPS. A helical membrane pass occupies residues 235-255; the sequence is GVAAGAALLFAVPAIAFAWWL. The Cytoplasmic segment spans residues 256 to 620; the sequence is RRKPQDHFFD…IENDYPSGPR (365 aa). Phosphothreonine is present on threonine 291. A Protein kinase domain is found at 294-591; it reads FSNKNVLGRG…KEEMPIHDFN (298 aa). Serine 295 is subject to Phosphoserine. ATP contacts are provided by residues 300–308 and lysine 322; that span reads LGRGGFGKV. Phosphoserine is present on residues serine 375 and serine 378. The active-site Proton acceptor is aspartate 421. Phosphothreonine is present on residues threonine 454, threonine 455, and threonine 460. Tyrosine 468 bears the Phosphotyrosine mark. Phosphoserine is present on serine 470. Threonine 471 carries the post-translational modification Phosphothreonine. At serine 475 the chain carries Phosphoserine. Threonine 551 carries the phosphothreonine modification.

Belongs to the protein kinase superfamily. Ser/Thr protein kinase family. In terms of assembly, interacts with the EF-Tu receptor EFR and FLS2 in a specific ligand-induced manner. Interacts with TMK4/BARK1. Interacts with ERECTA in a EPF2-induced manner. Interacts with ERL1 in a EPF1-induced manner. Interacts with TMM. Forms a complex with MIK2 in response to SCOOP12 perception. Autophosphorylated on Thr and Tyr residues.

It localises to the cell membrane. The enzyme catalyses L-seryl-[protein] + ATP = O-phospho-L-seryl-[protein] + ADP + H(+). It catalyses the reaction L-threonyl-[protein] + ATP = O-phospho-L-threonyl-[protein] + ADP + H(+). It carries out the reaction L-tyrosyl-[protein] + ATP = O-phospho-L-tyrosyl-[protein] + ADP + H(+). Dual specificity kinase acting on both serine/threonine- and tyrosine-containing substrates. Positively regulates the BR-dependent plant growth pathway and negatively regulates the BR-independent cell-death pathway. Required during SCOOP small peptides (e.g. SCOOP10 and SCOOP12) perception and signaling; associates with MIK2 as a coreceptor upon MIK2 perception of SCOOP peptides, and relays the signaling through the activation of receptor-like cytosolic kinases (RLCKs) BIK1 and PBL1. The polypeptide is Somatic embryogenesis receptor kinase 4 (Arabidopsis thaliana (Mouse-ear cress)).